The sequence spans 594 residues: Putative 3,4-dihydroxy-2-butanone kinase (594 aa).

The DhaK domain maps to 11–341 (DPNDVVTEFI…LDAPTKAPNW (331 aa)). Substrate-binding positions include 62–65 (GSGH), Lys113, and Asp118. His226 (tele-hemiaminal-histidine intermediate) is an active-site residue. A disordered region spans residues 339 to 358 (PNWPVGAEGNRPPAKIPVPL). The DhaL domain occupies 381–585 (HILETAIEAA…AAAWYRAAAL (205 aa)). ATP contacts are provided by residues 410-413 (DGDC), 455-456 (TS), Gly499, 507-508 (TL), and 570-572 (DPG).

This sequence belongs to the dihydroxyacetone kinase (DAK) family.

This Solanum lycopersicum (Tomato) protein is Putative 3,4-dihydroxy-2-butanone kinase (DHBK).